The following is a 248-amino-acid chain: PF03932 family protein CutC (248 aa).

Belongs to the CutC family. In terms of assembly, homodimer.

The protein resides in the cytoplasm. This chain is PF03932 family protein CutC, found in Escherichia coli (strain 55989 / EAEC).